The following is a 480-amino-acid chain: Transposase for transposon Tn552 (480 aa).

Residues 36-55 constitute a DNA-binding region (H-T-H motif); that stretch reads LSSISKSKGIALSTLYRWNK. One can recognise an Integrase catalytic domain in the interval 155 to 341; that stretch reads ESSRPNEIWQ…TPINRWNSNH (187 aa). A disordered region spans residues 438 to 480; sequence RKHLKQNIASPSTTDLIKEEKSYGYSPQETTKNVKKLKRYRND. The segment covering 470 to 480 has biased composition (basic residues); that stretch reads NVKKLKRYRND.

This is Transposase for transposon Tn552 from Staphylococcus aureus.